The following is a 477-amino-acid chain: MEWDTVIGLEVHAQLKTKSKLFSGASTAFGATPNSQTSFIDAGLPGVLPVLNEQAIIMAIQFGLAIHGTINDLSVFERKNYFYPDLPKGYQISQYQKPIVTNGYLNIQLGNNLEKTVHIARAHLEEDAGKSLHDAHTDYTGIDLNRAGTPLLEIVTTPCLYSAEEAVNYLKTLHQLVRFLGICDGNMQEGSFRCDVNLSIKPKGSSVLGTRTELKNLNSFRFIEKAIAFEQARHQDILERGLSVIQETRLYNPDNNTTQAMRGKENENDYRYFPDPDLLPIDIDKEQIEEIKNNLPDLPEAIYKELKNTPSLNDEDINFILSSPDTYQYYKKIKSLCPAADKTIINWLKGQYAAFLNEHNLTFETPPISAKTMAAFLSKIHEKKISSSIAKNIFSMLCAGEEDIDAIIEREGYQQQNDNSALEEIVEQIIKQYPEQVIEYKAGKEKLLAFFIGQAMKQTKGKANPEQINLLLKKHLG.

This sequence belongs to the GatB/GatE family. GatB subfamily. Heterotrimer of A, B and C subunits.

It catalyses the reaction L-glutamyl-tRNA(Gln) + L-glutamine + ATP + H2O = L-glutaminyl-tRNA(Gln) + L-glutamate + ADP + phosphate + H(+). The enzyme catalyses L-aspartyl-tRNA(Asn) + L-glutamine + ATP + H2O = L-asparaginyl-tRNA(Asn) + L-glutamate + ADP + phosphate + 2 H(+). Functionally, allows the formation of correctly charged Asn-tRNA(Asn) or Gln-tRNA(Gln) through the transamidation of misacylated Asp-tRNA(Asn) or Glu-tRNA(Gln) in organisms which lack either or both of asparaginyl-tRNA or glutaminyl-tRNA synthetases. The reaction takes place in the presence of glutamine and ATP through an activated phospho-Asp-tRNA(Asn) or phospho-Glu-tRNA(Gln). The sequence is that of Aspartyl/glutamyl-tRNA(Asn/Gln) amidotransferase subunit B from Legionella pneumophila (strain Paris).